A 478-amino-acid chain; its full sequence is 3-isopropylmalate dehydratase large subunit (478 aa).

3 residues coordinate [4Fe-4S] cluster: Cys347, Cys407, and Cys410.

It belongs to the aconitase/IPM isomerase family. LeuC type 1 subfamily. In terms of assembly, heterodimer of LeuC and LeuD. The cofactor is [4Fe-4S] cluster.

The enzyme catalyses (2R,3S)-3-isopropylmalate = (2S)-2-isopropylmalate. The protein operates within amino-acid biosynthesis; L-leucine biosynthesis; L-leucine from 3-methyl-2-oxobutanoate: step 2/4. In terms of biological role, catalyzes the isomerization between 2-isopropylmalate and 3-isopropylmalate, via the formation of 2-isopropylmaleate. The protein is 3-isopropylmalate dehydratase large subunit of Prochlorococcus marinus (strain MIT 9313).